The following is a 267-amino-acid chain: MSGERRLNGLSLKVGPLGEHDRLLTLLSDQEGVTRLAVPGARRPRSSLAAAVPLSLLELQVAGRRGLARVRQLKVLRSFNSVGKQLETLAAAQALAELSLMLVAGNDPLPGLLNTLLMHLERLEALSQAQPAQPNTTLACSVQACVHLLALGGYGLPVQECCRNGTALEPPLGQWEWRCSLMPEEGFAIGALPGAALQLNPSELALLQRLLRPALPMRRDGELMGPPEVWLRLLAVVECWIRTHLPHHMRALGMLREAIISSGDGRT.

The protein belongs to the RecO family.

Functionally, involved in DNA repair and RecF pathway recombination. The sequence is that of DNA repair protein RecO from Prochlorococcus marinus (strain MIT 9303).